We begin with the raw amino-acid sequence, 450 residues long: UDP-N-acetylmuramoylalanine--D-glutamate ligase (450 aa).

119-125 (GSNGKTT) contributes to the ATP binding site.

Belongs to the MurCDEF family.

Its subcellular location is the cytoplasm. The catalysed reaction is UDP-N-acetyl-alpha-D-muramoyl-L-alanine + D-glutamate + ATP = UDP-N-acetyl-alpha-D-muramoyl-L-alanyl-D-glutamate + ADP + phosphate + H(+). The protein operates within cell wall biogenesis; peptidoglycan biosynthesis. Cell wall formation. Catalyzes the addition of glutamate to the nucleotide precursor UDP-N-acetylmuramoyl-L-alanine (UMA). The polypeptide is UDP-N-acetylmuramoylalanine--D-glutamate ligase (Bacillus cereus (strain ATCC 14579 / DSM 31 / CCUG 7414 / JCM 2152 / NBRC 15305 / NCIMB 9373 / NCTC 2599 / NRRL B-3711)).